A 433-amino-acid chain; its full sequence is Glucoside xylosyltransferase 1 (433 aa).

Residues 1–6 lie on the Cytoplasmic side of the membrane; the sequence is MRRFAR. The helical; Signal-anchor for type II membrane protein transmembrane segment at 7-29 threads the bilayer; sequence VALLFLGCGVCSLLYGVSQLALS. Topologically, residues 30 to 433 are lumenal; it reads LEQEAGGARQ…DLSVRRSKGS (404 aa). The segment at 39-64 is disordered; it reads QRQARESAAPGGGRQAGSADGGEEGA. Asn-69, Asn-166, Asn-271, Asn-305, and Asn-380 each carry an N-linked (GlcNAc...) asparagine glycan.

This sequence belongs to the glycosyltransferase 8 family.

The protein resides in the membrane. The enzyme catalyses 3-O-(beta-D-glucosyl)-L-seryl-[EGF-like domain protein] + UDP-alpha-D-xylose = 3-O-[alpha-D-xylosyl-(1-&gt;3)-beta-D-glucosyl]-L-seryl-[EGF-like domain protein] + UDP + H(+). Functionally, glycosyltransferase which elongates the O-linked glucose attached to EGF-like repeats in the extracellular domain of Notch proteins by catalyzing the addition of xylose. This is Glucoside xylosyltransferase 1 (GXYLT1) from Gallus gallus (Chicken).